Reading from the N-terminus, the 500-residue chain is DNA polymerase processivity factor (500 aa).

A disordered region spans residues 388–500 (VSESDDAAAE…QEPANKRGKR (113 aa)). Polar residues predominate over residues 438–449 (TLQQSAQPSSPA).

The protein belongs to the herpesviridae DNA polymerase processivity factor family. In terms of assembly, interacts with the DNA polymerase catalytic subunit UL30. Interacts with the origin-binding protein.

It is found in the host nucleus. Functionally, plays an essential role in viral DNA replication by acting as the polymerase accessory subunit. Associates with the viral polymerase to increase its processivity and forms high-affinity direct interactions with DNA. Facilitates the origin-binding protein UL9 loading onto DNA thus increasing its ability to assemble into a functional complex capable of unwinding duplex DNA. The sequence is that of DNA polymerase processivity factor (UL42) from Amazona oratrix (yellow-headed parrot).